The sequence spans 128 residues: S-protein homolog 5 (128 aa).

The first 20 residues, 1-20 (MEKVSIVCFFFFLLFGSGYG), serve as a signal peptide directing secretion.

This sequence belongs to the plant self-incompatibility (S1) protein family.

The protein resides in the secreted. The protein is S-protein homolog 5 of Arabidopsis thaliana (Mouse-ear cress).